An 88-amino-acid chain; its full sequence is Antitoxin VapB21 (88 aa).

Functionally, antitoxin component of a type II toxin-antitoxin (TA) system. This chain is Antitoxin VapB21 (vapB21), found in Mycobacterium tuberculosis (strain CDC 1551 / Oshkosh).